Consider the following 778-residue polypeptide: Kin of IRRE-like protein 3 (778 aa).

A signal peptide spans 1–21; sequence MRPFQLDLLFLCFFLFSQELG. Topologically, residues 22 to 535 are extracellular; the sequence is LQKRGCCLVL…GLEAESVPMA (514 aa). Ig-like C2-type domains are found at residues 48 to 142, 147 to 243, 249 to 330, 335 to 415, and 419 to 515; these read YSFS…ARLT, PDDP…TSVT, PPLV…RTVD, PRMT…VTLT, and PPII…IRLK. Cys69 and Cys127 are oxidised to a cystine. Residue Asn167 is glycosylated (N-linked (GlcNAc...) asparagine). An intrachain disulfide couples Cys170 to Cys227. An N-linked (GlcNAc...) asparagine glycan is attached at Asn253. An intrachain disulfide couples Cys271 to Cys314. N-linked (GlcNAc...) asparagine glycosylation is present at Asn324. 2 cysteine pairs are disulfide-bonded: Cys356-Cys398 and Cys440-Cys499. Residue Asn498 is glycosylated (N-linked (GlcNAc...) asparagine). Residues 536-556 form a helical membrane-spanning segment; the sequence is VIIGVAVGAGVAFLVLMATIV. Residues 557–778 lie on the Cytoplasmic side of the membrane; it reads AFCCARSQRN…PLQRRMQTHV (222 aa). A compositionally biased stretch (polar residues) spans 727–736; that stretch reads CDSSVSSSGK. Residues 727–778 form a disordered region; sequence CDSSVSSSGKQDGYVQFDKASKASASSSHHSQSSSQNSDPSRPLQRRMQTHV. Low complexity predominate over residues 748-762; sequence KASASSSHHSQSSSQ.

It belongs to the immunoglobulin superfamily. In terms of assembly, homodimer; mediates homophilic interactions to promote cell adhesion. Interacts with NPHS1; forms heterodimers with NPHS1. Interacts with NPHS2/podocin (via the C-terminus). Interacts with CASK. Interacts (via extracellular region) with MAP1B. Interacts (via extracellular region) with MYO16. Interacts (via intracellular region) with ATP1B1. Interacts (via intracellular region) with SHMT2. Interacts (via intracellular region) with UFC1. Undergoes proteolysis by a metalloprotease and gives rise to a soluble form. Expressed mainly in adult brain, bone marrow and stromal cells. Expressed in diverse regions of the brain, including the cortex, hippocampus, striatum, olfactory bulb and cerebellum. In brain, expressed in pontine nucleus neurons (at protein level). In hippocampus, produced in both the dentate granule neurons and the GABAergic neurons, but not the CA3 neurons. Expressed in subpopulations of vomeronasal sensory neurons. Expressed in a subset of neurons in dorsal root ganglia.

The protein localises to the cell membrane. It is found in the cell projection. Its subcellular location is the axon. It localises to the dendrite. The protein resides in the secreted. Functionally, synaptic adhesion molecule required for the formation of target-specific synapses. Required for formation of target-specific synapses at hippocampal mossy fiber synapses. Required for formation of mossy fiber filopodia, the synaptic structures connecting dentate granule and GABA neurons. Probably acts as a homophilic adhesion molecule that promotes trans-cellular interactions and stabilize mossy fiber filipodia contact and subsequent synapse formation. Required for the coalescence of vomeronasal sensory neuron axons. May be involved in the hematopoietic supportive capacity of stroma cells; the secreted extracellular domain is directly responsible for supporting hematopoietic stem cells. The chain is Kin of IRRE-like protein 3 (Kirrel3) from Mus musculus (Mouse).